The primary structure comprises 281 residues: Cis-2,3-dihydrobiphenyl-2,3-diol dehydrogenase (281 aa).

10-34 is an NAD(+) binding site; that stretch reads ITGGASGLGRALVDRFVAEGARVAV. Ser142 is a binding site for substrate. Tyr155 functions as the Proton acceptor in the catalytic mechanism.

This sequence belongs to the short-chain dehydrogenases/reductases (SDR) family. In terms of assembly, homotetramer.

It catalyses the reaction (2R,3S)-3-phenylcyclohexa-3,5-diene-1,2-diol + NAD(+) = biphenyl-2,3-diol + NADH + H(+). It participates in xenobiotic degradation; biphenyl degradation; 2-hydroxy-2,4-pentadienoate and benzoate from biphenyl: step 2/4. The polypeptide is Cis-2,3-dihydrobiphenyl-2,3-diol dehydrogenase (bphB) (Comamonas testosteroni (Pseudomonas testosteroni)).